The sequence spans 362 residues: E3 ubiquitin-protein ligase TM129 (362 aa).

Residues 1-6 (MDSPEV) lie on the Lumenal side of the membrane. A helical transmembrane segment spans residues 7 to 27 (TFTLAYLVFAVCFVFTPNEFY). At 28–56 (SAGLTVQNLLSGWLGSEDAAFVPYHLRRT) the chain is on the cytoplasmic side. Residues 57–77 (SATLLCHSLLPLGYYMGMCFA) traverse the membrane as a helical segment. Topologically, residues 78–94 (ASEKQLYSPGQAPEAWQ) are lumenal. Residues 95–115 (LFLLLAVTLPLLSCTLIYYWS) form a helical membrane-spanning segment. At 116-362 (WDRWTRHPLA…FCILDVCCVR (247 aa)) the chain is on the cytoplasmic side. The RING-type; degenerate zinc finger occupies 285 to 350 (CIGCMQTRAS…ASRVPCPTCR (66 aa)).

It belongs to the TMEM129 family. In terms of assembly, integral component of ER-resident dislocation complexes.

It is found in the endoplasmic reticulum membrane. It carries out the reaction S-ubiquitinyl-[E2 ubiquitin-conjugating enzyme]-L-cysteine + [acceptor protein]-L-lysine = [E2 ubiquitin-conjugating enzyme]-L-cysteine + N(6)-ubiquitinyl-[acceptor protein]-L-lysine.. Its pathway is protein modification; protein ubiquitination. Its function is as follows. E3 ubiquitin-protein ligase involved in ER-associated protein degradation, preferentially associates with the E2 enzyme UBE2J2. Exploited by viral US11 proteins to mediate HLA class I proteins degradation. This is E3 ubiquitin-protein ligase TM129 (Tmem129) from Mus musculus (Mouse).